The primary structure comprises 207 residues: Large ribosomal subunit protein bL25 (207 aa).

The protein belongs to the bacterial ribosomal protein bL25 family. CTC subfamily. Part of the 50S ribosomal subunit; part of the 5S rRNA/L5/L18/L25 subcomplex. Contacts the 5S rRNA. Binds to the 5S rRNA independently of L5 and L18.

Its function is as follows. This is one of the proteins that binds to the 5S RNA in the ribosome where it forms part of the central protuberance. The sequence is that of Large ribosomal subunit protein bL25 from Bordetella petrii (strain ATCC BAA-461 / DSM 12804 / CCUG 43448).